The primary structure comprises 132 residues: MKFACRAITRGRAEGEALVTKEYISFLGGIDKETGIVKEDCEIKGESVAGRILVFPGGKGSTVGSYVLLNLRKNGVAPKAIINKKTETIIAVGAAMAEIPLVEVRDEKFFEAVKTGDRVVVNADEGYVELIE.

The Proton acceptor role is filled by Ser61.

This sequence belongs to the AcnX type II small subunit family. In terms of assembly, heterodimer composed of a large subunit (PMDh-L) and a small subunit (PMDh-S).

The enzyme catalyses (R)-5-phosphomevalonate = (2E)-3-methyl-5-phosphooxypent-2-enoate + H2O. The protein operates within isoprenoid biosynthesis; isopentenyl diphosphate biosynthesis via mevalonate pathway. Component of a hydro-lyase that catalyzes the dehydration of mevalonate 5-phosphate (MVA5P) to form trans-anhydromevalonate 5-phosphate (tAHMP). Involved in the archaeal mevalonate (MVA) pathway, which provides fundamental precursors for isoprenoid biosynthesis, such as isopentenyl diphosphate (IPP) and dimethylallyl diphosphate (DMAPP). The sequence is that of Phosphomevalonate dehydratase small subunit from Archaeoglobus fulgidus (strain ATCC 49558 / DSM 4304 / JCM 9628 / NBRC 100126 / VC-16).